The following is a 144-amino-acid chain: Granulocyte-macrophage colony-stimulating factor (144 aa).

A signal peptide spans 1-17; that stretch reads MWLQNLLFLGIVVYSFS. S22 carries an O-linked (GalNAc...) serine glycan. O-linked (GalNAc...) threonine glycosylation is present at T27. 2 disulfides stabilise this stretch: C71/C113 and C105/C138. N-linked (GlcNAc...) asparagine glycosylation occurs at N86.

It belongs to the GM-CSF family. As to quaternary structure, monomer. The signaling GM-CSF receptor complex is a dodecamer of two head-to-head hexamers of two alpha, two beta, and two ligand subunits.

The protein resides in the secreted. Functionally, cytokine that stimulates the growth and differentiation of hematopoietic precursor cells from various lineages, including granulocytes, macrophages, eosinophils and erythrocytes. This Rattus norvegicus (Rat) protein is Granulocyte-macrophage colony-stimulating factor (Csf2).